Consider the following 425-residue polypeptide: WD repeat-containing protein JIP5 (425 aa).

WD repeat units follow at residues 9 to 48 (QLDS…SDDS), 71 to 110 (RHKG…VTAK), 117 to 158 (LANG…AKSA), 219 to 262 (ELLS…DQDE), and 321 to 358 (LRQE…DVPE). The interval 354–425 (QDVPEDDEDE…HGILHFSGLA (72 aa)) is disordered. Composition is skewed to acidic residues over residues 356–368 (VPED…EEEA) and 378–396 (SDED…EDDE). Basic residues predominate over residues 399 to 414 (QKRKKRRKGKGGKQAK).

It belongs to the WD repeat WDR55 family.

It localises to the nucleus. The protein resides in the nucleolus. This is WD repeat-containing protein JIP5 (JIP5) from Phaeosphaeria nodorum (strain SN15 / ATCC MYA-4574 / FGSC 10173) (Glume blotch fungus).